Reading from the N-terminus, the 97-residue chain is Mitochondrial import inner membrane translocase subunit Tim8 A (97 aa).

The Twin CX3C motif motif lies at 43–66; sequence CWEKCMDKPGPKLDSRAEACFVNC. 2 disulfide bridges follow: Cys43–Cys66 and Cys47–Cys62. Phosphoserine is present on residues Ser57, Ser87, Ser94, and Ser96.

Belongs to the small Tim family. As to quaternary structure, heterohexamer; composed of 3 copies of TIMM8A and 3 copies of TIMM13, named soluble 70 kDa complex. Associates with the TIM22 complex, whose core is composed of TIMM22. In terms of tissue distribution, highly expressed in fetal and adult brain, followed by fetal lung, liver and kidney. Also expressed in heart, placenta, lung, liver, kidney, pancreas, skeletal muscle and heart.

The protein resides in the mitochondrion inner membrane. Its function is as follows. Mitochondrial intermembrane chaperone that participates in the import and insertion of some multi-pass transmembrane proteins into the mitochondrial inner membrane. Also required for the transfer of beta-barrel precursors from the TOM complex to the sorting and assembly machinery (SAM complex) of the outer membrane. Acts as a chaperone-like protein that protects the hydrophobic precursors from aggregation and guide them through the mitochondrial intermembrane space. The TIMM8-TIMM13 complex mediates the import of proteins such as TIMM23, SLC25A12/ARALAR1 and SLC25A13/ARALAR2, while the predominant TIMM9-TIMM10 70 kDa complex mediates the import of much more proteins. Probably necessary for normal neurologic development. In Homo sapiens (Human), this protein is Mitochondrial import inner membrane translocase subunit Tim8 A (TIMM8A).